We begin with the raw amino-acid sequence, 404 residues long: Phosphopentomutase (404 aa).

The Mn(2+) site is built by Asp10, Asp303, His308, Asp344, His345, and His356.

This sequence belongs to the phosphopentomutase family. Requires Mn(2+) as cofactor.

It localises to the cytoplasm. The enzyme catalyses 2-deoxy-alpha-D-ribose 1-phosphate = 2-deoxy-D-ribose 5-phosphate. The catalysed reaction is alpha-D-ribose 1-phosphate = D-ribose 5-phosphate. It functions in the pathway carbohydrate degradation; 2-deoxy-D-ribose 1-phosphate degradation; D-glyceraldehyde 3-phosphate and acetaldehyde from 2-deoxy-alpha-D-ribose 1-phosphate: step 1/2. Isomerase that catalyzes the conversion of deoxy-ribose 1-phosphate (dRib-1-P) and ribose 1-phosphate (Rib-1-P) to deoxy-ribose 5-phosphate (dRib-5-P) and ribose 5-phosphate (Rib-5-P), respectively. The polypeptide is Phosphopentomutase (Shewanella sp. (strain MR-4)).